A 137-amino-acid polypeptide reads, in one-letter code: Small ribosomal subunit protein uS9 (137 aa).

This sequence belongs to the universal ribosomal protein uS9 family.

The protein is Small ribosomal subunit protein uS9 (rps9) of Sulfurisphaera tokodaii (strain DSM 16993 / JCM 10545 / NBRC 100140 / 7) (Sulfolobus tokodaii).